A 338-amino-acid polypeptide reads, in one-letter code: Uroporphyrinogen decarboxylase (338 aa).

Residues arginine 25 to arginine 29, phenylalanine 44, aspartate 75, tyrosine 146, serine 201, and histidine 314 contribute to the substrate site.

Belongs to the uroporphyrinogen decarboxylase family. Homodimer.

The protein localises to the cytoplasm. It carries out the reaction uroporphyrinogen III + 4 H(+) = coproporphyrinogen III + 4 CO2. It functions in the pathway porphyrin-containing compound metabolism; protoporphyrin-IX biosynthesis; coproporphyrinogen-III from 5-aminolevulinate: step 4/4. Functionally, catalyzes the decarboxylation of four acetate groups of uroporphyrinogen-III to yield coproporphyrinogen-III. The polypeptide is Uroporphyrinogen decarboxylase (Aquifex aeolicus (strain VF5)).